We begin with the raw amino-acid sequence, 935 residues long: MKRMLINATQKEELRVALVDGQRLFDLDIESPGHEQKKANIYKGKITRVEPSLEAAFVDYGAERHGFLPLKEIAREYFPDDYVFQGRPNIRDILVEGQEVIVQVNKEERGNKGAALTTFVSLAGSYLVLMPNNPRAGGISRRIEGDERTELKEALSSLDVPDGVGLIVRTAGVGKSPEELQWDLKVLLHHWEAIKQASQSRPAPFLIHQESDVIVRAIRDYLRRDIGEILIDSPKIFEKAKEHIKLVRPDFINRVKLYQGEVPLFSHYQIESQIESAFQREVRLPSGGSIVIDVTEALTAIDINSARSTRGGDIEETALNTNLEAADEIARQLRLRDLGGLVVIDFIDMTPIRHQREVENRIRDAVRPDRARIQISRISRFGLLEMSRQRLSPSLGESSHHICPRCQGTGKVRDNESLSLSILRLLEEEALKENTKQVHTIVPVQIASYLLNEKRKAISNIEKRHNVDIIVAPNEAMETPHFSVFRLRDGEEVNELSYNLAKIHCAQDENTEESLLSRNVETTAVIEQPAVESAVVALSISEAAPTPVERKSNEPSLLAKIIAKIKGLFATKSEENKPKNNRTSRNPNRNQRRSQDRRSSRRPRSENNETERTEEQVRNVRERNQRRPRRNLVEESIAESAVNSTPVFEAKEERTEPVTQRRQRRDLRKRVRVEDNETVVENNFSTTEKMPEVDVITVQNNDEKPVHQNQRSERQERQRRTPRHLRAANNQRRRRDQEPKSPMPLFAAVVSPELASGKAWIDYSTVNLPKENHFLSVDELLEQEKTKKGFITPAMGIVVEEKSPDVKPALDFITQPANESVQKKVQESLDRLSSYKPQEVVESIDPAINVDEPETLEKVSKFVRTYEFNGRLGTISSVPHTKAEMTLAKANDEMPEDFPIRAWQDSRYYFYGKGAAGHHCAISHVYSEPTRTKSE.

The 81-residue stretch at 39–119 (ANIYKGKITR…GNKGAALTTF (81 aa)) folds into the S1 motif domain. Mg(2+)-binding residues include D302 and D345. Residues C403 and C406 each contribute to the Zn(2+) site. Residues 403-406 (CPRC) form a required for zinc-mediated homotetramerization and catalytic activity region. Disordered regions lie at residues 571–669 (TKSE…DLRK) and 698–743 (VQNN…KSPM). Composition is skewed to basic and acidic residues over residues 593-625 (RSQD…ERNQ) and 701-719 (NDEK…ERQR). The span at 720–734 (RTPRHLRAANNQRRR) shows a compositional bias: basic residues.

Belongs to the RNase E/G family. RNase E subfamily. Component of the RNA degradosome, which is a multiprotein complex involved in RNA processing and mRNA degradation. Within the RNA degradosome, RNase E assembles into a homotetramer formed by a dimer of dimers. Zn(2+) serves as cofactor. The cofactor is Mg(2+).

It localises to the cytoplasm. The protein resides in the cell inner membrane. The enzyme catalyses Endonucleolytic cleavage of single-stranded RNA in A- and U-rich regions.. Functionally, endoribonuclease that plays a central role in RNA processing and decay. Required for the maturation of 5S and 16S rRNAs and the majority of tRNAs. Also involved in the degradation of most mRNAs. The protein is Ribonuclease E of Haemophilus influenzae (strain ATCC 51907 / DSM 11121 / KW20 / Rd).